Consider the following 55-residue polypeptide: Large ribosomal subunit protein bL33B (55 aa).

The protein belongs to the bacterial ribosomal protein bL33 family.

The chain is Large ribosomal subunit protein bL33B from Mycobacteroides abscessus (strain ATCC 19977 / DSM 44196 / CCUG 20993 / CIP 104536 / JCM 13569 / NCTC 13031 / TMC 1543 / L948) (Mycobacterium abscessus).